We begin with the raw amino-acid sequence, 216 residues long: Large ribosomal subunit protein uL24m (216 aa).

A mitochondrion-targeting transit peptide spans 1-9 (MRLTALLSM). Residues 56–89 (VVRGDTVEVLSGKEKGKQGKVAQVIRARNWVILE) form the KOW domain. The tract at residues 167 to 186 (PQQWKDGPKDTSPEDTLQKT) is disordered.

This sequence belongs to the universal ribosomal protein uL24 family. In terms of assembly, component of the mitochondrial ribosome large subunit (39S) which comprises a 16S rRNA and about 50 distinct proteins.

It localises to the mitochondrion. This is Large ribosomal subunit protein uL24m (mrpl24) from Danio rerio (Zebrafish).